The primary structure comprises 423 residues: Hydroxymethylglutaryl-CoA synthase-like protein AKT4-1 (423 aa).

The protein belongs to the thiolase-like superfamily. HMG-CoA synthase family.

Its pathway is mycotoxin biosynthesis. Its function is as follows. Hydroxymethylglutaryl-CoA synthase-like protein; part of the gene clusters that mediate the biosynthesis of the host-selective toxins (HSTs) AK-toxins responsible for Japanese pear black spot disease by the Japanese pear pathotype. AK-toxins are esters of 9,10-epoxy 8-hydroxy 9-methyldecatrienoic acid (EDA). On cellular level, AK-toxins affect plasma membrane of susceptible cells and cause a sudden increase in loss of K(+) after a few minutes of toxin treatment. The acyl-CoA ligase AKT1, the hydrolase AKT2 and enoyl-CoA hydratase AKT3 are all involved in the biosynthesis of the AK-, AF- and ACT-toxin common 9,10-epoxy-8-hydroxy-9-methyl-decatrienoic acid (EDA) structural moiety. Part of the EDA biosynthesis occurs in the peroxisome since these 3 enzymes are localized in peroxisomes. The exact roles of the 3 enzymes, as well as of additional AK-toxin clusters enzymes, including AKT4, AKT6 and AKTS1, have still to be elucidated. The Cytochrome P450 monooxygenase AKT7 on the other side functions to limit production of EDA and AK-toxin, probably via the catalysis of a side reaction of EDA or its precursor. The sequence is that of Hydroxymethylglutaryl-CoA synthase-like protein AKT4-1 from Alternaria alternata (Alternaria rot fungus).